Reading from the N-terminus, the 446-residue chain is Methylenetetrahydrofolate--tRNA-(uracil-5-)-methyltransferase TrmFO (446 aa).

FAD is bound at residue Gly-9 to Gly-14.

The protein belongs to the MnmG family. TrmFO subfamily. FAD serves as cofactor.

The protein resides in the cytoplasm. The enzyme catalyses uridine(54) in tRNA + (6R)-5,10-methylene-5,6,7,8-tetrahydrofolate + NADH + H(+) = 5-methyluridine(54) in tRNA + (6S)-5,6,7,8-tetrahydrofolate + NAD(+). It catalyses the reaction uridine(54) in tRNA + (6R)-5,10-methylene-5,6,7,8-tetrahydrofolate + NADPH + H(+) = 5-methyluridine(54) in tRNA + (6S)-5,6,7,8-tetrahydrofolate + NADP(+). Its function is as follows. Catalyzes the folate-dependent formation of 5-methyl-uridine at position 54 (M-5-U54) in all tRNAs. The polypeptide is Methylenetetrahydrofolate--tRNA-(uracil-5-)-methyltransferase TrmFO (Ruegeria sp. (strain TM1040) (Silicibacter sp.)).